Consider the following 2310-residue polypeptide: Retinal-specific phospholipid-transporting ATPase ABCA4 (2310 aa).

Residues 1 to 21 lie on the Cytoplasmic side of the membrane; it reads MGFLRQIQLLLWKNWTLRKRQ. A helical transmembrane segment spans residues 22–42; it reads KIRFVVELVWPLSLFLVLIWL. Residues 43 to 646 lie on the Extracellular side of the membrane; the sequence is RNANPLYSQH…MPYPCFVDDS (604 aa). 2 cysteine pairs are disulfide-bonded: C54-C81 and C75-C324. N98 is a glycosylation site (N-linked (GlcNAc...) asparagine). S336 and N338 together coordinate Mg(2+). The cysteines at positions 370 and 519 are disulfide-linked. N-linked (GlcNAc...) asparagine glycans are attached at residues N415 and N504. An N-all-trans-retinylidenephosphatidylethanolamine is bound by residues R587 and R653. Cystine bridges form between C641/C1489, C1443/C1454, and C1487/C1501. A helical membrane pass occupies residues 647–667; that stretch reads FMIILNRCFPIFMVLAWIYSV. Residues 668-699 are Cytoplasmic-facing; the sequence is SMTVKGIVLEKELRLKETLKNQGVSNAVIWCT. The helical transmembrane segment at 700–720 threads the bilayer; sequence WFLDSFSIMALSIFLLTLFIM. Residues 721–730 are Extracellular-facing; the sequence is HGRILHYSDP. Residues 731 to 751 form a helical membrane-spanning segment; the sequence is FILFLFLLAFATATIMQSFLL. The Cytoplasmic segment spans residues 752 to 759; that stretch reads STLFSKAS. The helical transmembrane segment at 760 to 780 threads the bilayer; that stretch reads LAAACSGVIYFTLYLPHVLCF. Residues 781-835 are Extracellular-facing; that stretch reads AWQDRMTADLKTTVSLLSSVAFGFGTEYLVRFEEQGLGLQWSNIGKSPLEGDEFS. A helical membrane pass occupies residues 836 to 856; it reads FLLSMKMMLLDAALYGLLAWY. Over 857-1375 the chain is Cytoplasmic; that stretch reads LDQVFPGDYG…IRSRKDFVAQ (519 aa). The interval 891–910 is disordered; sequence ERALEKTEPLTEEMEDPEHP. At T901 the chain carries Phosphothreonine. In terms of domain architecture, ABC transporter 1 spans 929-1160; it reads VCVKNLVKVF…FGTGFYLTLV (232 aa). The ATP site is built by F938, G966, and K969. T970 contributes to the Mg(2+) binding site. T971, Q1010, K1054, G1064, G1065, and H1118 together coordinate ATP. A Phosphoserine modification is found at S1185. Residues 1311-1344 are disordered; the sequence is RQYAQAPHTCSPGQVDPPKGQPSPEPEDPGVPFN. A helical transmembrane segment spans residues 1376 to 1396; that stretch reads IVLPATFVFLALMLSIIVPPF. Over 1397–1726 the chain is Extracellular; that stretch reads GEFPALTLHP…VSPTTYWLTN (330 aa). N1468 carries N-linked (GlcNAc...) asparagine glycosylation. N-linked (GlcNAc...) asparagine glycans are attached at residues N1528, N1587, and N1661. The chain crosses the membrane as a helical span at residues 1727–1747; it reads FLWDIMNYAVSAGLVVGIFIG. At 1748–1758 the chain is on the cytoplasmic side; it reads FQKKAYTSPDN. The chain crosses the membrane as a helical span at residues 1759 to 1779; sequence LPALVSLLMLYGWAVIPMMYP. The Extracellular portion of the chain corresponds to 1780 to 1791; sequence ASFLFEVPSTAY. The helical transmembrane segment at 1792-1812 threads the bilayer; it reads VALSCANLFIGINSSAITFVL. The Cytoplasmic portion of the chain corresponds to 1813–1830; it reads ELFENNRTLLRFNAMLRK. Residues 1831 to 1851 form a helical membrane-spanning segment; it reads LLIVFPHFCLGRGLIDLALSQ. The Extracellular segment spans residues 1852-1872; the sequence is AVTDVYAQFGEEYSANPFQWD. A helical transmembrane segment spans residues 1873–1893; sequence LIGKNLVAMAIEGVVYFLLTL. Residues 1894 to 2310 are Cytoplasmic-facing; that stretch reads LIQHHFFLTR…AEDKHTRSPQ (417 aa). Residues 1937-2169 form the ABC transporter 2 domain; that stretch reads LKLNELTKVY…FGDGYIVTMK (233 aa). Residues N1973, G1974, K1977, T1978, T1979, and G2072 each coordinate ATP. T1978 contacts Mg(2+). An essential for ATP binding and ATPase activity region spans residues 2243–2248; that stretch reads VFVNFA. A disordered region spans residues 2266–2310; it reads ASWQAKLEEKSGRLQTQEPLPAGSEQLANGSNPTAAEDKHTRSPQ. Residues 2301 to 2310 are compositionally biased toward basic and acidic residues; it reads AEDKHTRSPQ.

Belongs to the ABC transporter superfamily. ABCA family. N-glycosylated. Post-translationally, proteolytic cleavage by trypsin leads to a 120-kDa N-terminal fragment and a 115-kDa C-terminal fragment that are linked through disulfide bonds. In terms of processing, phosphorylation is independent of light exposure and modulates ATPase activity. Retinal-specific. Seems to be exclusively found in the rims of rod photoreceptor cells.

It localises to the membrane. Its subcellular location is the endoplasmic reticulum. The protein localises to the cell projection. The protein resides in the cilium. It is found in the photoreceptor outer segment. It carries out the reaction an N-all-trans-retinylidenephosphatidylethanolamine(out) + ATP + H2O = an N-all-trans-retinylidenephosphatidylethanolamine(in) + ADP + phosphate + H(+). It catalyses the reaction ATP + H2O + phospholipidSide 1 = ADP + phosphate + phospholipidSide 2.. The catalysed reaction is a 1,2-diacyl-sn-glycero-3-phosphoethanolamine(out) + ATP + H2O = a 1,2-diacyl-sn-glycero-3-phosphoethanolamine(in) + ADP + phosphate + H(+). The enzyme catalyses N-11-cis-retinylidenephosphatidylethanolamine(out) + ATP + H2O = N-11-cis-retinylidenephosphatidylethanolamine(in) + ADP + phosphate + H(+). It carries out the reaction ATP + H2O = ADP + phosphate + H(+). Its activity is regulated as follows. ATPase activity is decreased by cholesterol and ceramide. Phospholipids translocase activity is highly reduced by berylium fluoride and aluminum floride. N-ethylmaleimide inhibits phospholipid translocase activity. Its function is as follows. Flippase that catalyzes in an ATP-dependent manner the transport of retinal-phosphatidylethanolamine conjugates like the 11-cis and all-trans isomers of N-retinylidene-phosphatidylethanolamine from the lumen to the cytoplasmic leaflet of photoreceptor outer segment disk membranes, where N-cis-retinylidene-phosphatidylethanolamine (N-cis-R-PE) is then isomerized to its all-trans isomer (N-trans-R-PE) and reduced by RDH8 to produce all-trans-retinol (all-trans-rol) and therefore prevents the accumulation of excess of 11-cis-retinal and its schiff-base conjugate and the formation of toxic bisretinoid. Displays ATPase activity in vitro in absence of retinal substrate. May display GTPase activity that is strongly influenced by the lipid environment and the presence of retinoid compounds. Binds the unprotonated form of N-retinylidene-phosphatidylethanolamine with high affinity in the absence of ATP and ATP binding and hydrolysis induce a protein conformational change that causes the dissociation of N-retinylidene-phosphatidylethanolamine. The chain is Retinal-specific phospholipid-transporting ATPase ABCA4 from Mus musculus (Mouse).